A 463-amino-acid chain; its full sequence is Asparagine--tRNA ligase (463 aa).

It belongs to the class-II aminoacyl-tRNA synthetase family. In terms of assembly, homodimer.

It is found in the cytoplasm. It carries out the reaction tRNA(Asn) + L-asparagine + ATP = L-asparaginyl-tRNA(Asn) + AMP + diphosphate + H(+). The sequence is that of Asparagine--tRNA ligase from Clostridium novyi (strain NT).